The chain runs to 435 residues: Methylenetetrahydrofolate--tRNA-(uracil-5-)-methyltransferase TrmFO (435 aa).

10 to 15 (GAGLAG) lines the FAD pocket.

This sequence belongs to the MnmG family. TrmFO subfamily. Requires FAD as cofactor.

It is found in the cytoplasm. It catalyses the reaction uridine(54) in tRNA + (6R)-5,10-methylene-5,6,7,8-tetrahydrofolate + NADH + H(+) = 5-methyluridine(54) in tRNA + (6S)-5,6,7,8-tetrahydrofolate + NAD(+). The catalysed reaction is uridine(54) in tRNA + (6R)-5,10-methylene-5,6,7,8-tetrahydrofolate + NADPH + H(+) = 5-methyluridine(54) in tRNA + (6S)-5,6,7,8-tetrahydrofolate + NADP(+). Its function is as follows. Catalyzes the folate-dependent formation of 5-methyl-uridine at position 54 (M-5-U54) in all tRNAs. This Geotalea uraniireducens (strain Rf4) (Geobacter uraniireducens) protein is Methylenetetrahydrofolate--tRNA-(uracil-5-)-methyltransferase TrmFO.